Here is a 360-residue protein sequence, read N- to C-terminus: Leukotriene B4 receptor 2 (360 aa).

Residues 1–24 (MSVCYRPPGNETLLSWKGSRATGT) are Extracellular-facing. An N-linked (GlcNAc...) asparagine glycan is attached at N10. Residues 25–45 (AFLLLAALLGLPGNGFVVWSL) form a helical membrane-spanning segment. Residues 46-60 (AGWRPTAGRPLAATL) are Cytoplasmic-facing. Residues 61 to 81 (VLHLALADGAVLLLTPLFVAF) form a helical membrane-spanning segment. At 82–96 (LSQEAWPLGQVGCKA) the chain is on the extracellular side. The chain crosses the membrane as a helical span at residues 97 to 117 (VYYVCALSMYASVLLTGLLSL). The Cytoplasmic segment spans residues 118-140 (QRCLAVTRPFLAPRLRSPALARR). The helical transmembrane segment at 141-161 (LLLGVWLAALVLAVPAAVYRH) threads the bilayer. Residues 162–185 (LWGGRVCQLCHPSPVHAAAHLSLE) are Extracellular-facing. Residues 186–206 (TLTAFVLPFGTVLGCYGVTLA) form a helical membrane-spanning segment. Residues 207 to 224 (RLRGARWGSGRQGTRVGR) lie on the Cytoplasmic side of the membrane. Residues 225–245 (LVSAIVLAFGLLWAPYHAVNL) traverse the membrane as a helical segment. Residues 246–275 (LQAVAALAPPEGPLARLGGAGQAARAGTTA) lie on the Extracellular side of the membrane. The helical transmembrane segment at 276–296 (LAFFSSSVNPVLYVFTAGDLL) threads the bilayer. The Cytoplasmic portion of the chain corresponds to 297 to 360 (PRAGPRFLTR…GKTEKDSQEW (64 aa)). The interval 311-360 (SGEARGGSRSREGTMELRTTPKLKVMGQGRGNGDPGGGDGGKTEKDSQEW) is disordered. Residues 338–350 (QGRGNGDPGGGDG) are compositionally biased toward gly residues. Positions 351–360 (GKTEKDSQEW) are enriched in basic and acidic residues.

The protein belongs to the G-protein coupled receptor 1 family.

The protein localises to the cell membrane. Low-affinity receptor for leukotrienes including leukotriene B4. Mediates chemotaxis of granulocytes and macrophages. The response is mediated via G-proteins that activate a phosphatidylinositol-calcium second messenger system. In Mus musculus (Mouse), this protein is Leukotriene B4 receptor 2 (Ltb4r2).